Here is a 50-residue protein sequence, read N- to C-terminus: Inducible serine protease inhibitor 1 (50 aa).

The interval 1-27 (DLVXGTNFXKNNPXSTRVAANSXRSPS) is disordered. Residues 8-25 (FXKNNPXSTRVAANSXRS) are compositionally biased toward polar residues.

Functionally, inhibits trypsin and the toxin protease PR2 of M.anisopliae. Does not inhibit chymotrypsin, subtilisin Carlsberg, proteinase K, porcine pancreatic elastase and the toxin protease PR1 of M.anisopliae. This chain is Inducible serine protease inhibitor 1, found in Galleria mellonella (Greater wax moth).